Consider the following 156-residue polypeptide: MPMRLQKSTMCGLYAVLELAANPDRQVSAGDIADKYDISLNHLAKVLRALVRARLIESVRGPGGGYRFAGNPKRVTLLDIIALFEDTGLDLQEAASDDHEESRALHKVLRDIDEIAMTTLRSVSITSLLKVIDTERRKTERGPNGASARHSSAGRA.

One can recognise an HTH rrf2-type domain in the interval 4-130 (RLQKSTMCGL…RSVSITSLLK (127 aa)). Positions 136 to 156 (RRKTERGPNGASARHSSAGRA) are disordered. Residues 145–156 (GASARHSSAGRA) show a composition bias toward low complexity.

The sequence is that of Putative HTH-type transcriptional regulator BadM (badM) from Rhodopseudomonas palustris (strain ATCC BAA-98 / CGA009).